The sequence spans 296 residues: NAD kinase (296 aa).

Aspartate 72 acts as the Proton acceptor in catalysis. NAD(+) is bound by residues 72 to 73 (DG), 146 to 147 (ND), arginine 157, lysine 174, aspartate 176, 187 to 192 (TAYALS), and glutamine 247.

This sequence belongs to the NAD kinase family. A divalent metal cation serves as cofactor.

The protein localises to the cytoplasm. It carries out the reaction NAD(+) + ATP = ADP + NADP(+) + H(+). Involved in the regulation of the intracellular balance of NAD and NADP, and is a key enzyme in the biosynthesis of NADP. Catalyzes specifically the phosphorylation on 2'-hydroxyl of the adenosine moiety of NAD to yield NADP. The chain is NAD kinase from Pseudomonas putida (strain W619).